We begin with the raw amino-acid sequence, 469 residues long: uncharacterized protein (469 aa).

Over residues 152–161 (VREGKEEKKG) the composition is skewed to basic and acidic residues. Residues 152 to 174 (VREGKEEKKGGPPGRGPPGWRRR) form a disordered region. Coiled-coil stretches lie at residues 346 to 375 (KAALEQNDRLRSELEMEVALLQSAKERSES) and 423 to 453 (SDITENRIKSIEHEAIQLETENMILKKKIKG).

This is an uncharacterized protein from Homo sapiens (Human).